An 84-amino-acid chain; its full sequence is Gas vesicle protein M1 (84 aa).

Residues 1 to 25 (MEPTKDETHAIVEFVDVLLRDGAVI) are interacts with GvpL1. The tract at residues 5-21 (KDETHAIVEFVDVLLRD) is alpha helix 1. 2 beta-strand regions span residues 27–29 (ADV) and 41–43 (ISL). The Conserved in GvpJ1/2 but not GvpA signature appears at 44-48 (RAAIA). Alpha helix regions lie at residues 46 to 56 (AIAGMTTMTEY) and 62 to 84 (WDAAHRQQSEAFTTSPTADRRED).

Belongs to the gas vesicle GvpA family. As to quaternary structure, gvpF to GvpM interact with each other in vitro, and may form multi-subunit complex(es). Might interact with GvpA1.

Its subcellular location is the gas vesicle. Functionally, proteins GvpF to GvpM might be involved in nucleating gas vesicle formation. A minor component of the gas vesicle. Gas vesicles are hollow, gas filled proteinaceous nanostructures found in several microbial planktonic microorganisms. They allow positioning of halobacteria at the optimal depth for growth in the poorly aerated, shallow brine pools of their habitat. In terms of biological role, expression of a 9.5 kb p-vac DNA fragment containing 2 divergently transcribed regions (gvpD-gvpE-gvpF-gvpG-gvpH-gvpI-gvpJ-gvpK-gvpL-gvpM and gvpA-gvpC-gvpN-gvpO) allows H.volcanii to produce gas vesicles. All site-directed mutagenesis is tested in H.volcanii. A minimal gas vesicle can be made in H.volcanii by gvpA1-gvpO1 plus gvpF1-gvpG1-gvpJ1-gvpK1-gvpL1-gvpM1; lack of enough GvpJ1 prevents formation. A similar region restores gas vesicle production in H.halobium without the p-vac locus, but it still has the c-vac locus. This is Gas vesicle protein M1 (gvpM11) from Halobacterium salinarum (strain ATCC 700922 / JCM 11081 / NRC-1) (Halobacterium halobium).